A 64-amino-acid polypeptide reads, in one-letter code: Translational regulator CsrA (64 aa).

The protein belongs to the CsrA/RsmA family. Homodimer; the beta-strands of each monomer intercalate to form a hydrophobic core, while the alpha-helices form wings that extend away from the core.

The protein resides in the cytoplasm. Its function is as follows. A key translational regulator that binds mRNA to regulate translation initiation and/or mRNA stability. Mediates global changes in gene expression, shifting from rapid growth to stress survival by linking envelope stress, the stringent response and the catabolite repression systems. Usually binds in the 5'-UTR; binding at or near the Shine-Dalgarno sequence prevents ribosome-binding, repressing translation, binding elsewhere in the 5'-UTR can activate translation and/or stabilize the mRNA. Its function is antagonized by small RNA(s). This chain is Translational regulator CsrA, found in Thioalkalivibrio sulfidiphilus (strain HL-EbGR7).